Consider the following 73-residue polypeptide: Bacterioferritin-associated ferredoxin (73 aa).

[2Fe-2S] cluster-binding residues include Cys4 and Cys6. The phosphate site is built by Arg26 and Arg29. [2Fe-2S] cluster is bound by residues Cys38 and Cys41. A phosphate-binding site is contributed by Lys46.

Belongs to the Bfd family. Monomer. Interacts with BfrB; up to 12 Bfd proteins can bind to the BfrB bacterioferritin complex (BFR). One Bfd protein binds to a BfrB dimer in the BFR, with the [2Fe-2S] cluster positioned about 22 Angstroms above the heme of BfrB. Does not interact with FtnA. It depends on [2Fe-2S] cluster as a cofactor. Requires phosphate as cofactor.

Functionally, required for mobilization of iron from the bacterioferritin (BFR) complex, composed of BfrB and FtnA in varying proportions; mobilization requires the [2Fe-2S] cluster of this protein. Reduction of the BfrB heme group occurs in the presence of Bfd, strongly suggesting that the BfrB-Bfd complex allows heme to mediate electron transfer from FPR to the Fe(3+) iron core in the BFR prior to its release as Fe(2+). The polypeptide is Bacterioferritin-associated ferredoxin (Pseudomonas aeruginosa (strain ATCC 15692 / DSM 22644 / CIP 104116 / JCM 14847 / LMG 12228 / 1C / PRS 101 / PAO1)).